The following is a 131-amino-acid chain: Large ribosomal subunit protein bL17 (131 aa).

This sequence belongs to the bacterial ribosomal protein bL17 family. Part of the 50S ribosomal subunit. Contacts protein L32.

This chain is Large ribosomal subunit protein bL17, found in Shewanella sp. (strain ANA-3).